We begin with the raw amino-acid sequence, 329 residues long: Ankyrin repeat and SOCS box protein 5 (329 aa).

ANK repeat units follow at residues 69 to 98 (ADRSPLHEAASQGRLLALRTLLSQGYNVNA), 102 to 131 (DHVTPLHEACLGDHVACARTLLEAGANVNA), 135 to 164 (DGVTPLFNACSQGSPSCAELLLEYGAKAQL), 167 to 196 (CLPSPTHEAASKGHHECLDILISWGIDVDQ), 200 to 229 (HLGTPLYVACMSQQFHCIWKLLYAGADVQK), and 232 to 261 (YWDTPLHAAAQQSSTEIVNLLLEFGADINA). Residues 278-329 (MVERILLQHEATPSSLYQLCRLCIRSYIGKPRLHLIPQLQLPTLLKNFLQYR) enclose the SOCS box domain.

The protein belongs to the ankyrin SOCS box (ASB) family.

It participates in protein modification; protein ubiquitination. Functionally, may be a substrate-recognition component of a SCF-like ECS (Elongin-Cullin-SOCS-box protein) E3 ubiquitin-protein ligase complex which mediates the ubiquitination and subsequent proteasomal degradation of target proteins. May play a role in the initiation of arteriogenesis. This chain is Ankyrin repeat and SOCS box protein 5 (ASB5), found in Homo sapiens (Human).